Reading from the N-terminus, the 756-residue chain is MATTHNLGFPRIGGQRELKFALEDYWGGRQTEQELAITAADLRLRHWQQQAGLDYVPVGDFSLYDQVLDMSVTLGNLPIRAASKEGSELDAYFRAARGRGANDSPCCATAAGEMTKWFDTNYHYIVPELTADTHFELNPERLLTQLSEARKQGLNAKPVIIGPVTYLWLGKTSDASNRLDLLERLLPVYSQLLEALADAGAEWVQLDEPALVTDLDANWRYAFNLAYHQLKANRPKLLLATYFGELRDNLQLACELPVAGLHIDAISAPAEVSRVADWLPSHKVLSLGVVNGRNIWKSDLNSTLGWLEPLNEKLGQRLWLAPSCSLLHAPVDLSREQELDSDIRNWLAFAVQKLDELQILARALNEGRSSVRAELADNQLAIDSRRNSHRVTNPEVRKAVASVTPELGNRHSPYPQRIARQRERLNLPAFPTTTIGSFPQTREIRQARLQFRKGELSEQAYIEQMRAEIVRCVEAQEKLGLDVLVHGEPERNDMVEYFGEQLDGYAFTRFGWVQSYGSRCVKPPILFGDIRRPQAMTVEWIRYAQSLTDKPVKGMLTGPVTILNWSFVRDDQPRKDSCLQLALAIREEVQDLEKAGVNIIQIDEAALREGLPLRQSDWATYLEWAINSFRIAANGVDDSTQIHTHMCYSEFNDIIEAIARMDADVITIETSRSDMELLDAFRSFEYPNDIGPGVYDIHSPNIPDKEHIINLMTLAAERIPAERLWINPDCGLKTRKWEEVTPALETMVAAARELRS.

Residues 16-19 and lysine 116 contribute to the 5-methyltetrahydropteroyltri-L-glutamate site; that span reads RELK. Residues 435 to 437 and glutamate 488 contribute to the L-homocysteine site; that span reads IGS. L-methionine-binding positions include 435-437 and glutamate 488; that span reads IGS. 5-methyltetrahydropteroyltri-L-glutamate is bound by residues 519–520 and tryptophan 565; that span reads RC. Aspartate 603 lines the L-homocysteine pocket. An L-methionine-binding site is contributed by aspartate 603. Glutamate 609 contributes to the 5-methyltetrahydropteroyltri-L-glutamate binding site. Histidine 645, cysteine 647, and glutamate 669 together coordinate Zn(2+). Histidine 698 functions as the Proton donor in the catalytic mechanism. Cysteine 730 is a binding site for Zn(2+).

This sequence belongs to the vitamin-B12 independent methionine synthase family. It depends on Zn(2+) as a cofactor.

It catalyses the reaction 5-methyltetrahydropteroyltri-L-glutamate + L-homocysteine = tetrahydropteroyltri-L-glutamate + L-methionine. It functions in the pathway amino-acid biosynthesis; L-methionine biosynthesis via de novo pathway; L-methionine from L-homocysteine (MetE route): step 1/1. Functionally, catalyzes the transfer of a methyl group from 5-methyltetrahydrofolate to homocysteine resulting in methionine formation. The protein is 5-methyltetrahydropteroyltriglutamate--homocysteine methyltransferase of Marinobacter nauticus (strain ATCC 700491 / DSM 11845 / VT8) (Marinobacter aquaeolei).